Consider the following 93-residue polypeptide: Small ribosomal subunit protein uS19 (93 aa).

It belongs to the universal ribosomal protein uS19 family.

In terms of biological role, protein S19 forms a complex with S13 that binds strongly to the 16S ribosomal RNA. This is Small ribosomal subunit protein uS19 from Mycolicibacterium smegmatis (strain ATCC 700084 / mc(2)155) (Mycobacterium smegmatis).